The following is a 332-amino-acid chain: Ornithine carbamoyltransferase 1, catabolic (332 aa).

Carbamoyl phosphate contacts are provided by residues 56 to 59, Gln83, Arg107, and 134 to 137; these read STRT and HPTQ. Residues Asn167, Asp231, and 235-236 contribute to the L-ornithine site; that span reads SM. Carbamoyl phosphate-binding positions include 273 to 274 and Arg318; that span reads CL.

The protein belongs to the aspartate/ornithine carbamoyltransferase superfamily. OTCase family.

It is found in the cytoplasm. It catalyses the reaction carbamoyl phosphate + L-ornithine = L-citrulline + phosphate + H(+). The protein operates within amino-acid degradation; L-arginine degradation via ADI pathway; carbamoyl phosphate from L-arginine: step 2/2. In terms of biological role, reversibly catalyzes the transfer of the carbamoyl group from carbamoyl phosphate (CP) to the N(epsilon) atom of ornithine (ORN) to produce L-citrulline. In Streptococcus agalactiae serotype III (strain NEM316), this protein is Ornithine carbamoyltransferase 1, catabolic (arcB1).